A 345-amino-acid polypeptide reads, in one-letter code: tRNA N6-adenosine threonylcarbamoyltransferase (345 aa).

Fe cation-binding residues include H111 and H115. Substrate is bound by residues 134–138 (LVSGG), D167, G180, and N277. D305 serves as a coordination point for Fe cation.

Belongs to the KAE1 / TsaD family. The cofactor is Fe(2+).

The protein resides in the cytoplasm. The enzyme catalyses L-threonylcarbamoyladenylate + adenosine(37) in tRNA = N(6)-L-threonylcarbamoyladenosine(37) in tRNA + AMP + H(+). Functionally, required for the formation of a threonylcarbamoyl group on adenosine at position 37 (t(6)A37) in tRNAs that read codons beginning with adenine. Is involved in the transfer of the threonylcarbamoyl moiety of threonylcarbamoyl-AMP (TC-AMP) to the N6 group of A37, together with TsaE and TsaB. TsaD likely plays a direct catalytic role in this reaction. The polypeptide is tRNA N6-adenosine threonylcarbamoyltransferase (Laribacter hongkongensis (strain HLHK9)).